Here is an 89-residue protein sequence, read N- to C-terminus: Small ribosomal subunit protein bS16 (89 aa).

It belongs to the bacterial ribosomal protein bS16 family.

The chain is Small ribosomal subunit protein bS16 from Geobacillus stearothermophilus (Bacillus stearothermophilus).